Reading from the N-terminus, the 389-residue chain is Large envelope protein (389 aa).

Residue methionine 1 is modified to N-acetylmethionine. The N-myristoyl glycine; by host moiety is linked to residue glycine 2. The segment at glycine 2–alanine 108 is pre-S1. Residues glycine 2–asparagine 163 form a pre-S region. Residues glycine 2–glycine 170 lie on the Virion surface; in external conformation side of the membrane. Topologically, residues glycine 2–arginine 242 are intravirion; in internal conformation. Asparagine 37 is a glycosylation site (O-linked (GalNAc...) threonine). The interval threonine 76 to asparagine 103 is disordered. Residues serine 85–threonine 95 show a composition bias toward polar residues. The pre-S2 stretch occupies residues methionine 109–asparagine 163. The chain crosses the membrane as a helical span at residues phenylalanine 171–isoleucine 191. Over proline 192–arginine 242 the chain is Intravirion; in external conformation. The helical transmembrane segment at phenylalanine 243–tyrosine 263 threads the bilayer. The Virion surface segment spans residues glutamine 264–serine 337. N-linked (GlcNAc...) asparagine; by host glycosylation is present at asparagine 309. Residues leucine 338 to isoleucine 358 traverse the membrane as a helical segment. Residues tryptophan 359–tryptophan 364 lie on the Intravirion side of the membrane. A helical membrane pass occupies residues glycine 365 to valine 387. Over tyrosine 388 to isoleucine 389 the chain is Virion surface.

Belongs to the orthohepadnavirus major surface antigen family. In its internal form (Li-HBsAg), interacts with the capsid protein and with the isoform S. Interacts with host chaperone CANX. In terms of assembly, associates with host chaperone CANX through its pre-S2 N glycan; this association may be essential for isoform M proper secretion. As to quaternary structure, interacts with isoform L. Interacts with the antigens of satellite virus HDV (HDVAgs); this interaction is required for encapsidation of HDV genomic RNA. Post-translationally, isoform M is N-terminally acetylated by host at a ratio of 90%, and N-glycosylated by host at the pre-S2 region. In terms of processing, myristoylated.

The protein localises to the virion membrane. The large envelope protein exists in two topological conformations, one which is termed 'external' or Le-HBsAg and the other 'internal' or Li-HBsAg. In its external conformation the protein attaches the virus to cell receptors and thereby initiating infection. This interaction determines the species specificity and liver tropism. This attachment induces virion internalization predominantly through caveolin-mediated endocytosis. The large envelope protein also assures fusion between virion membrane and endosomal membrane. In its internal conformation the protein plays a role in virion morphogenesis and mediates the contact with the nucleocapsid like a matrix protein. Its function is as follows. The middle envelope protein plays an important role in the budding of the virion. It is involved in the induction of budding in a nucleocapsid independent way. In this process the majority of envelope proteins bud to form subviral lipoprotein particles of 22 nm of diameter that do not contain a nucleocapsid. This is Large envelope protein from Homo sapiens (Human).